Here is a 187-residue protein sequence, read N- to C-terminus: Homeobox expressed in ES cells 1-B (187 aa).

Residues 110–169 constitute a DNA-binding region (homeobox); the sequence is GRRPRTAFTRSQIEILENVFRVNSYPGIDVREELASKLALDEDRIQIWFQNRRAKLKRSH.

This sequence belongs to the ANF homeobox family. In terms of assembly, the N-terminus interacts with the LIM 2 domain of zyx. First expressed at a low level in the late blastula stage (stage 9) in most cells of the animal half of the embryo. Following this, predominantly expressed in two zones; the dorsal blastopore lip (Spemann organizer) at the beginning of gastrulation, and subsequently in the anterior part of the neural anlage (the region of future forebrain).

The protein localises to the nucleus. Its function is as follows. Regulates the earliest stages of development of the anterior neural plate. Plays a role in forebrain development by inhibiting the expression of otx2 and pax6 in the rostral region of the anterior neural plate. Necessary for both neural differentiation and neural patterning. Controls Spemann organizer development. May act as a transcriptional repressor. The chain is Homeobox expressed in ES cells 1-B (hesx1-b) from Xenopus laevis (African clawed frog).